The following is a 737-amino-acid chain: Probable beta-glucosidase L (737 aa).

The first 19 residues, 1–19, serve as a signal peptide directing secretion; that stretch reads MRSLIRSGALNAFLAASLA. An N-linked (GlcNAc...) asparagine glycan is attached at asparagine 225. Residue aspartate 253 is part of the active site. N-linked (GlcNAc...) asparagine glycosylation is found at asparagine 340, asparagine 365, and asparagine 608.

This sequence belongs to the glycosyl hydrolase 3 family.

It localises to the secreted. It catalyses the reaction Hydrolysis of terminal, non-reducing beta-D-glucosyl residues with release of beta-D-glucose.. It functions in the pathway glycan metabolism; cellulose degradation. Beta-glucosidases are one of a number of cellulolytic enzymes involved in the degradation of cellulosic biomass. Catalyzes the last step releasing glucose from the inhibitory cellobiose. The sequence is that of Probable beta-glucosidase L (bglL) from Emericella nidulans (strain FGSC A4 / ATCC 38163 / CBS 112.46 / NRRL 194 / M139) (Aspergillus nidulans).